An 855-amino-acid chain; its full sequence is MGSNRGRKAGGGSQDFGAGLKYNSRLENMNGFEEGVEFLPANNAKKVEKRGPRRWVVLVAVLFSFLLLSLMAGLLVWHFHYRNVRVQKVFNGHLRITNEIFLDAYENSTSTEFISLASQVKEALKLLYNEVPVLGPYHKKSAVTAFSEGSVIAYYWSEFSIPPHLAEEVDRAMAVERVVTLPPRARALKSFVLTSVVAFPIDPRMLQRTQDNSCSFALHAHGAAVTRFTTPGFPNSPYPAHARCQWVLRGDADSVLSLTFRSFDVAPCDEHGSDLVTVYDSLSPMEPHAVVRLCGTFSPSYNLTFLSSQNVFLVTLITNTDRRHPGFEATFFQLPKMSSCGGFLSDTQGTFSSPYYPGHYPPNINCTWNIKVPNNRNVKVRFKLFYLVDPNVPVGSCTKDYVEINGEKYCGERSQFVVSSNSSKITVHFHSDHSYTDTGFLAEYLSYDSNDPCPGMFMCKTGRCIRKELRCDGWADCPDYSDERYCRCNATHQFTCKNQFCKPLFWVCDSVNDCGDGSDEEGCSCPAGSFKCSNGKCLPQSQKCNGKDNCGDGSDEASCDSVNVVSCTKYTYRCQNGLCLSKGNPECDGKTDCSDGSDEKNCDCGLRSFTKQARVVGGTNADEGEWPWQVSLHALGQGHLCGASLISPDWLVSAAHCFQDDKNFKYSDYTMWTAFLGLLDQSKRSASGVQELKLKRIITHPSFNDFTFDYDIALLELEKSVEYSTVVRPICLPDATHVFPAGKAIWVTGWGHTKEGGTGALILQKGEIRVINQTTCEDLMPQQITPRMMCVGFLSGGVDSCQGDSGGPLSSAEKDGRMFQAGVVSWGEGCAQRNKPGVYTRLPVVRDWIKEHTGV.

Over 1–55 the chain is Cytoplasmic; it reads MGSNRGRKAGGGSQDFGAGLKYNSRLENMNGFEEGVEFLPANNAKKVEKRGPRRW. Ser-13 carries the post-translational modification Phosphoserine. Residues 56–76 form a helical; Signal-anchor for type II membrane protein membrane-spanning segment; it reads VVLVAVLFSFLLLSLMAGLLV. Residues 77–855 lie on the Extracellular side of the membrane; sequence WHFHYRNVRV…RDWIKEHTGV (779 aa). The SEA domain maps to 86–203; the sequence is VQKVFNGHLR…TSVVAFPIDP (118 aa). Asn-107 is a glycosylation site (N-linked (GlcNAc...) asparagine). Cys-214 and Cys-244 are disulfide-bonded. CUB domains follow at residues 214–331 and 340–444; these read CSFA…EATF and CGGF…LAEY. N-linked (GlcNAc...) asparagine glycosylation is found at Asn-302 and Asn-365. 2 disulfides stabilise this stretch: Cys-340-Cys-366 and Cys-397-Cys-410. Residue Asn-421 is glycosylated (N-linked (GlcNAc...) asparagine). LDL-receptor class A domains are found at residues 451–488, 489–522, 523–561, and 565–604; these read DPCP…YCRC, NATH…DEEG, CSCP…SCDS, and VSCT…NCDC. Intrachain disulfides connect Cys-453–Cys-464, Cys-459–Cys-477, Cys-471–Cys-486, Cys-488–Cys-501, Cys-496–Cys-514, Cys-508–Cys-523, Cys-525–Cys-537, Cys-532–Cys-550, Cys-544–Cys-559, Cys-567–Cys-579, Cys-574–Cys-593, Cys-587–Cys-602, and Cys-641–Cys-657. A glycan (N-linked (GlcNAc...) asparagine) is linked at Asn-489. The Peptidase S1 domain maps to 615-854; that stretch reads VVGGTNADEG…VRDWIKEHTG (240 aa). Residues His-656 and Asp-711 each act as charge relay system in the active site. Residue Asn-772 is glycosylated (N-linked (GlcNAc...) asparagine). 2 cysteine pairs are disulfide-bonded: Cys-776–Cys-790 and Cys-801–Cys-830. The active-site Charge relay system is the Ser-805.

Belongs to the peptidase S1 family. In terms of assembly, interacts with CDCP1. May interact with TMEFF1. In terms of tissue distribution, highly expressed in intestine, kidney, lung, and thymus. Not expressed in skeletal muscle, liver, heart, testis and brain.

The protein localises to the membrane. The catalysed reaction is Cleaves various synthetic substrates with Arg or Lys at the P1 position and prefers small side-chain amino acids, such as Ala and Gly, at the P2 position.. Functionally, exhibits trypsin-like activity as defined by cleavage of synthetic substrates with Arg or Lys as the P1 site. Involved in the terminal differentiation of keratinocytes through prostasin (PRSS8) activation and filaggrin (FLG) processing. Proteolytically cleaves and therefore activates TMPRSS13. This chain is Suppressor of tumorigenicity 14 protein homolog (St14), found in Mus musculus (Mouse).